The following is a 322-amino-acid chain: GDSL esterase/lipase At5g03600 (322 aa).

S21 acts as the Nucleophile in catalysis. Active-site residues include D295 and H298.

It belongs to the 'GDSL' lipolytic enzyme family.

The chain is GDSL esterase/lipase At5g03600 from Arabidopsis thaliana (Mouse-ear cress).